The primary structure comprises 85 residues: Beta-insect depressant toxin LqhIT2 (85 aa).

The N-terminal stretch at 1 to 21 (MKLLLLLIVSASMLIESLVNA) is a signal peptide. In terms of domain architecture, LCN-type CS-alpha/beta spans 22 to 82 (DGYIKRRDGC…TWKSETNTCG (61 aa)). 4 disulfides stabilise this stretch: C31-C81, C35-C56, C42-C63, and C46-C65. G82 is subject to Glycine amide.

It belongs to the long (4 C-C) scorpion toxin superfamily. Sodium channel inhibitor family. Beta subfamily. As to expression, expressed by the venom gland.

The protein localises to the secreted. Functionally, depressant insect beta-toxins cause a transient contraction paralysis followed by a slow flaccid paralysis. They bind voltage-independently at site-4 of sodium channels (Nav) and shift the voltage of activation toward more negative potentials thereby affecting sodium channel activation and promoting spontaneous and repetitive firing. This toxin is active only on insects. In Leiurus hebraeus (Hebrew deathstalker scorpion), this protein is Beta-insect depressant toxin LqhIT2.